The primary structure comprises 122 residues: Nuclear transport factor 2A (122 aa).

M1 is subject to N-acetylmethionine. The NTF2 domain occupies 6–119 (VAKAFVEHYY…YYVFNDIFRL (114 aa)).

In terms of assembly, interacts with RAN1. Expressed in roots, stems, leaves and flowers, and, at low levels, in siliques.

It localises to the cytoplasm. The protein localises to the nucleus. It is found in the nucleus envelope. Facilitates protein transport into the nucleus. Interacts with various nucleoporins and with Ran-GDP. Could be part of a multicomponent system of cytosolic factors that assemble at the pore complex during nuclear import. This chain is Nuclear transport factor 2A, found in Arabidopsis thaliana (Mouse-ear cress).